A 548-amino-acid polypeptide reads, in one-letter code: Glucose-6-phosphate isomerase 1 (548 aa).

E353 acts as the Proton donor in catalysis. Residues H384 and K495 contribute to the active site.

It belongs to the GPI family.

The protein localises to the cytoplasm. It carries out the reaction alpha-D-glucose 6-phosphate = beta-D-fructose 6-phosphate. Its pathway is carbohydrate biosynthesis; gluconeogenesis. The protein operates within carbohydrate degradation; glycolysis; D-glyceraldehyde 3-phosphate and glycerone phosphate from D-glucose: step 2/4. Its function is as follows. Catalyzes the reversible isomerization of glucose-6-phosphate to fructose-6-phosphate. This chain is Glucose-6-phosphate isomerase 1, found in Chromohalobacter salexigens (strain ATCC BAA-138 / DSM 3043 / CIP 106854 / NCIMB 13768 / 1H11).